The sequence spans 80 residues: Clavanin-D (80 aa).

The first 19 residues, 1–19, serve as a signal peptide directing secretion; the sequence is MKTTILILLILGLGINAKS. Positions 20–29 are excised as a propeptide; sequence LEERKSEEEK. Position 52 is a phenylalanine amide (Phe-52). Residues 54-80 constitute a propeptide that is removed on maturation; that stretch reads DDQQDNGKFYGHYAEDNGKHWYDTGDQ.

Hemocytes and pharyngeal tissues.

It is found in the secreted. Functionally, has antimicrobial activity against E.coli, L.monocytogenes and C.albicans. This Styela clava (Sea squirt) protein is Clavanin-D.